The sequence spans 675 residues: Protein PALS1 (675 aa).

Disordered stretches follow at residues 1–34 (MTTS…KHRE) and 51–78 (RRSA…KKQE). Residues 1–345 (MTTSHMNGHV…QQIKPPPAKE (345 aa)) form a required for the correct localization of PALS1 and PATJ at cell-cell contacts and the normal formation of tight junctions and adherens junctions region. Composition is skewed to basic and acidic residues over residues 10-34 (VTEE…KHRE) and 54-78 (AQLE…KKQE). Phosphoserine is present on residues S14 and S25. The interaction with PARD6B stretch occupies residues 21–140 (VDLASPEEHQ…LKHIQHTLID (120 aa)). A phosphoserine mark is found at S83 and S84. L27 domains follow at residues 120-177 (KILE…NKAS) and 179-235 (PFPL…MQLE). The tract at residues 181 to 243 (PLISNAQDLA…LEPITDERVY (63 aa)) is interaction with LIN7C. Positions 256-336 (IVRIEKARDI…TLTFVLIPSQ (81 aa)) constitute a PDZ domain. Positions 345 to 417 (ETVIHVKAHF…PGKSFQQQRE (73 aa)) constitute an SH3 domain. Residues 479–660 (KRPIILIGPQ…AYQELLRLIN (182 aa)) form the Guanylate kinase-like domain. An ATP-binding site is contributed by 486–493 (GPQNCGQN).

It belongs to the MAGUK family. As to quaternary structure, heterodimer with MPP1. Forms a heterotrimeric complex composed of PALS1, LIN7B and PATJ; the N-terminal L27 domain of PALS1 interacts with the L27 domain of PATJ and the C-terminal L27 domain of PALS1 interacts with the L27 domain of LIN7B. Component of a complex composed of PALS1, CRB1 and MPP4. Component of a complex whose core is composed of ARHGAP17, AMOT, PALS1, PATJ and PARD3/PAR3. Component of a complex composed of PALS1, CRB1 and EPB41L5. Within the complex, interacts (via HOOK domain) with EPB41L5 (via FERM domain), and interacts with CRB1 (via intracellular domain). Component of a complex composed of PALS1, MPP3 and CRB1; PALS1 acts as a bridging protein between MPP3 (via guanylate kinase-like domain) and CRB1. Component of a complex composed of CRB3, PALS1 and PATJ. As part of the Crumbs complex; interacts with WWP1, the interaction is enhanced by AMOTL2 and facilitates WWP1 localization to the plasma membrane. The Crumbs complex promotes monoubiquitination of AMOTL2 by WWP1, which activates the Hippo signaling pathway. Interacts (via PDZ domain) with PATJ (via N-terminus). Interacts with EZR. Interacts (via PDZ domain) with CRB1 (via C-terminal ERLI motif). While the PDZ domain is sufficient for interaction with CRB1, the adjacent SH3 and guanylate kinase-like domains are likely to contribute to a high affinity interaction. Interacts with WWTR1/TAZ (via WW domain). Interacts with MPP7. Interacts (via PDZ domain) with CRB3 (via C-terminus). Interacts with LIN7C. Interacts with MPDZ. Interacts with PARD6B. Interacts with SC6A1. Interacts with CDH5; the interaction promotes PALS1 localization to cell junctions and is required for CDH5-mediated vascular lumen formation and endothelial cell. Interacts with NPHP1 (via coiled coil and SH3 domains). Interacts with NPHP4. Interacts with CRB2.

It is found in the golgi apparatus. It localises to the cell membrane. The protein localises to the endomembrane system. Its subcellular location is the cell junction. The protein resides in the tight junction. It is found in the adherens junction. It localises to the cell projection. The protein localises to the axon. Its subcellular location is the perikaryon. The protein resides in the apical cell membrane. In terms of biological role, plays a role in tight junction biogenesis and in the establishment of cell polarity in epithelial cells. Also involved in adherens junction biogenesis by ensuring correct localization of the exocyst complex protein EXOC4/SEC8 which allows trafficking of adherens junction structural component CDH1 to the cell surface. Plays a role through its interaction with CDH5 in vascular lumen formation and endothelial membrane polarity. Required during embryonic and postnatal retinal development. Required for the maintenance of cerebellar progenitor cells in an undifferentiated proliferative state, preventing premature differentiation, and is required for cerebellar histogenesis, fissure formation, cerebellar layer organization and cortical development. Plays a role in neuronal progenitor cell survival, potentially via promotion of mTOR signaling. Plays a role in the radial and longitudinal extension of the myelin sheath in Schwann cells. May modulate SC6A1/GAT1-mediated GABA uptake by stabilizing the transporter. May play a role in the T-cell receptor-mediated activation of NF-kappa-B. Required for localization of EZR to the apical membrane of parietal cells and may play a role in the dynamic remodeling of the apical cytoskeleton. Required for the normal polarized localization of the vesicular marker STX4. Required for the correct trafficking of the myelin proteins PMP22 and MAG. Involved in promoting phosphorylation and cytoplasmic retention of transcriptional coactivators YAP1 and WWTR1/TAZ which leads to suppression of TGFB1-dependent transcription of target genes such as CCN2/CTGF, SERPINE1/PAI1, SNAI1/SNAIL1 and SMAD7. The polypeptide is Protein PALS1 (Pongo abelii (Sumatran orangutan)).